The primary structure comprises 230 residues: 2,3-bisphosphoglycerate-dependent phosphoglycerate mutase (230 aa).

Substrate contacts are provided by residues 8-15, 21-22, arginine 60, 87-90, lysine 98, and 114-115; these read RHGQSIWN, TG, ERHY, and RR. The active-site Tele-phosphohistidine intermediate is the histidine 9. The Proton donor/acceptor role is filled by glutamate 87. Residues 117–143 form a disordered region; sequence YDTPPPALDAEDERHPRHDPRYAGLDP. The segment covering 128-137 has biased composition (basic and acidic residues); the sequence is DERHPRHDPR. Substrate is bound at residue 183–184; sequence GN.

The protein belongs to the phosphoglycerate mutase family. BPG-dependent PGAM subfamily. In terms of assembly, homodimer.

The enzyme catalyses (2R)-2-phosphoglycerate = (2R)-3-phosphoglycerate. Its pathway is carbohydrate degradation; glycolysis; pyruvate from D-glyceraldehyde 3-phosphate: step 3/5. Its function is as follows. Catalyzes the interconversion of 2-phosphoglycerate and 3-phosphoglycerate. In Halorhodospira halophila (strain DSM 244 / SL1) (Ectothiorhodospira halophila (strain DSM 244 / SL1)), this protein is 2,3-bisphosphoglycerate-dependent phosphoglycerate mutase.